The primary structure comprises 272 residues: 3-methyl-2-oxobutanoate hydroxymethyltransferase (272 aa).

Mg(2+) is bound by residues aspartate 51 and aspartate 90. 3-methyl-2-oxobutanoate contacts are provided by residues 51-52, aspartate 90, and lysine 119; that span reads DS. Glutamate 121 lines the Mg(2+) pocket. Residue glutamate 188 is the Proton acceptor of the active site.

Belongs to the PanB family. In terms of assembly, homodecamer; pentamer of dimers. The cofactor is Mg(2+).

It localises to the cytoplasm. It catalyses the reaction 3-methyl-2-oxobutanoate + (6R)-5,10-methylene-5,6,7,8-tetrahydrofolate + H2O = 2-dehydropantoate + (6S)-5,6,7,8-tetrahydrofolate. It functions in the pathway cofactor biosynthesis; (R)-pantothenate biosynthesis; (R)-pantoate from 3-methyl-2-oxobutanoate: step 1/2. Functionally, catalyzes the reversible reaction in which hydroxymethyl group from 5,10-methylenetetrahydrofolate is transferred onto alpha-ketoisovalerate to form ketopantoate. This chain is 3-methyl-2-oxobutanoate hydroxymethyltransferase, found in Dechloromonas aromatica (strain RCB).